Here is a 463-residue protein sequence, read N- to C-terminus: Fumarate hydratase class II (463 aa).

Substrate is bound by residues 98–100, 129–132, 139–141, and threonine 187; these read SGT, HPND, and SSN. Residues 121–141 form a disordered region; that stretch reads KKGGKSPVHPNDHVNKGQSSN. Histidine 188 (proton donor/acceptor) is an active-site residue. Serine 318 is an active-site residue. Substrate-binding positions include serine 319 and 324–326; that span reads KVN.

This sequence belongs to the class-II fumarase/aspartase family. Fumarase subfamily. As to quaternary structure, homotetramer.

The protein localises to the cytoplasm. The catalysed reaction is (S)-malate = fumarate + H2O. It participates in carbohydrate metabolism; tricarboxylic acid cycle; (S)-malate from fumarate: step 1/1. Functionally, involved in the TCA cycle. Catalyzes the stereospecific interconversion of fumarate to L-malate. This is Fumarate hydratase class II from Rickettsia conorii (strain ATCC VR-613 / Malish 7).